The sequence spans 500 residues: Intermediate filament protein ifc-1 (500 aa).

Positions 1-36 (MSLYGGIPTNLVSGMSSAGAICTTQIRDAREREKRE) are head. In terms of domain architecture, IF rod spans 33–383 (EKREIGLLND…VLLNGANVTT (351 aa)). A coil 1A region spans residues 37 to 68 (IGLLNDRLADYIEKVRFLKAQNHVLSHDIEIL). The linker 1 stretch occupies residues 69 to 81 (RRGFSGGGHISSF). Positions 82–219 (FESEISNCTV…TENSSRIEQE (138 aa)) are coil 1B. Residues 220–237 (LIYIHRDTTLENRDYFRQ) are linker 12. The segment at 238 to 383 (ELQAAMRDIR…VLLNGANVTT (146 aa)) is coil 2. The tail stretch occupies residues 384–496 (YVSNSTGAAG…RHHESSYSYS (113 aa)).

Belongs to the intermediate filament family.

It is found in the cytoplasm. In terms of biological role, cytoplasmic intermediate filaments provide mechanical strength to cells. Not essential protein. This Caenorhabditis elegans protein is Intermediate filament protein ifc-1 (ifc-1).